The chain runs to 309 residues: MILTVTMNPSIDISYPLDELKIDTVNRVVDVTKTAGGKGLNVTRVLSEFGDSVLATGLVGGKLGEFLVEHIDNQVKKDFFSIQGETRNCIAILHGDNQTEVLEKGPEVLEQEGQDFLEHFKKLLESVEVVAISGSLPTGLPVDYYASLVELANQAGKPVVLDCSGAALQAVLESPHKPTVIKPNNEELSQLLGREVSEDLDELKEVLQEPLFAGIEWIIVSLGANGTFAKHGDTFYKVDIPRIQVVNPVGSGDSTVAGISSGLLHKESDAELLIKANVLGMLNAQEKMTGHVNMANYQALYDQLIVKEV.

Belongs to the carbohydrate kinase PfkB family. LacC subfamily.

It carries out the reaction D-tagatofuranose 6-phosphate + ATP = D-tagatofuranose 1,6-bisphosphate + ADP + H(+). The protein operates within carbohydrate metabolism; D-tagatose 6-phosphate degradation; D-glyceraldehyde 3-phosphate and glycerone phosphate from D-tagatose 6-phosphate: step 1/2. In Streptococcus pneumoniae (strain 70585), this protein is Tagatose-6-phosphate kinase.